The chain runs to 398 residues: Thyrotropin-releasing hormone receptor (398 aa).

Residues 1-28 (MENETVSELNQTQLQPRAVVALEYQVVT) are Extracellular-facing. N-linked (GlcNAc...) asparagine glycosylation is found at Asn-3 and Asn-10. Residues 29–51 (ILLVLIICGLGIVGNIMVVLVVM) traverse the membrane as a helical segment. The Cytoplasmic segment spans residues 52 to 61 (RTKHMRTPTN). The chain crosses the membrane as a helical span at residues 62–83 (CYLVSLAVADLMVLVAAGLPNI). Residues 84–99 (TDSIYGSWVYGYVGCL) are Extracellular-facing. Cys-98 and Cys-179 are disulfide-bonded. Residues 100–121 (CITYLQYLGINASSCSITAFTI) form a helical membrane-spanning segment. Residues 122–144 (ERYIAICHPIKAQFLCTFSRAKK) lie on the Cytoplasmic side of the membrane. The helical transmembrane segment at 145 to 168 (IIIFVWAFTSLYCMLWFFLLDLNI) threads the bilayer. Over 169-193 (STYKDAIVISCGYKISRNYYSPIYL) the chain is Extracellular. Residues 194–215 (MDFGVFYVVPMILATVLYGFIA) traverse the membrane as a helical segment. Topologically, residues 216–266 (RILFLNPIPSDPKENSKTWKNDSTHQNTNLNVNTSNRCFNSTVSSRKQVTK) are cytoplasmic. Residues 267–288 (MLAVVVILFALLWMPYRTLVVV) form a helical membrane-spanning segment. The Extracellular portion of the chain corresponds to 289 to 296 (NSFLSSPF). A helical membrane pass occupies residues 297-319 (QENWFLLFCRICIYLNSAINPVI). The Cytoplasmic segment spans residues 320–398 (YNLMSQKFRA…LASEVSFSQS (79 aa)).

The protein belongs to the G-protein coupled receptor 1 family.

It localises to the cell membrane. In terms of biological role, receptor for thyrotropin-releasing hormone (TRH). Upon ligand binding, this G-protein-coupled receptor triggers activation of the phosphatidylinositol (IP3)-calcium-protein kinase C (PKC) pathway. The chain is Thyrotropin-releasing hormone receptor (TRHR) from Homo sapiens (Human).